The following is a 246-amino-acid chain: Probable transcriptional regulatory protein CGSHiEE_01480 (246 aa).

This sequence belongs to the TACO1 family.

It is found in the cytoplasm. This chain is Probable transcriptional regulatory protein CGSHiEE_01480, found in Haemophilus influenzae (strain PittEE).